The primary structure comprises 471 residues: GTPase Der (471 aa).

2 EngA-type G domains span residues 3-168 (PIVA…PDLS) and 178-353 (VRVA…ANHA). GTP-binding positions include 9 to 16 (GRPNVGKS), 56 to 60 (DTGGI), 120 to 123 (NKVE), 184 to 191 (GRPNVGKS), 231 to 235 (DTAGM), and 296 to 299 (NKWD). Residues 354-438 (RRISTRELND…PINLYFRTRE (85 aa)) form the KH-like domain.

This sequence belongs to the TRAFAC class TrmE-Era-EngA-EngB-Septin-like GTPase superfamily. EngA (Der) GTPase family. As to quaternary structure, associates with the 50S ribosomal subunit.

Functionally, GTPase that plays an essential role in the late steps of ribosome biogenesis. In Symbiobacterium thermophilum (strain DSM 24528 / JCM 14929 / IAM 14863 / T), this protein is GTPase Der.